Here is a 462-residue protein sequence, read N- to C-terminus: Metal cation symporter ZIP8 (462 aa).

The N-terminal stretch at 1-19 (MAPGRAVAGLLLLAATGLG) is a signal peptide. Over 20-132 (RPSEGPELAF…PSFSEVWGYG (113 aa)) the chain is Extracellular. 3 N-linked (GlcNAc...) asparagine glycosylation sites follow: Asn40, Asn88, and Asn96. Residues 133–153 (FLSVTIINLASLLGLILTPLI) form a helical membrane-spanning segment. Topologically, residues 154-160 (KKSYFPK) are cytoplasmic. Residues 161-181 (ILTYFVGLAIGTLFSNAIFQL) traverse the membrane as a helical segment. Topologically, residues 182–191 (IPEAFGFNPK) are extracellular. The chain crosses the membrane as a helical span at residues 192–212 (IDNYVEKAVAVFGGFYMLFFV). At 213–367 (ERTLKMLLKT…LNAGMSTRQA (155 aa)) the chain is on the cytoplasmic side. The XEXPHE-motif signature appears at 345 to 350 (EEFPHE). Residues 368–388 (LLFNFLSACSCYVGLAFGILV) form a helical membrane-spanning segment. The Extracellular segment spans residues 389-390 (GN). Residues 391-411 (NFAPNIIFALAGGMFLYISLA) form a helical membrane-spanning segment. Over 412-431 (DMFPEMNDMLREKVTGRQTD) the chain is Cytoplasmic. Residues 432 to 452 (FTFFMIQNAGMLTGFTAILLI) traverse the membrane as a helical segment. Residues 453 to 462 (TLYAGDIELQ) are Extracellular-facing.

Belongs to the ZIP transporter (TC 2.A.5) family. In terms of assembly, homodimer. In terms of processing, N-glycosylated. N-glycosylation is not required for proper iron and zinc transport.

The protein resides in the cell membrane. The protein localises to the lysosome membrane. Its subcellular location is the apical cell membrane. It localises to the basolateral cell membrane. The enzyme catalyses Zn(2+)(out) + 2 hydrogencarbonate(out) = Zn(2+)(in) + 2 hydrogencarbonate(in). It catalyses the reaction selenite(out) + Zn(2+)(out) + hydrogencarbonate(out) = selenite(in) + Zn(2+)(in) + hydrogencarbonate(in). It carries out the reaction Mn(2+)(out) + 2 hydrogencarbonate(out) = Mn(2+)(in) + 2 hydrogencarbonate(in). The catalysed reaction is Fe(2+)(out) + 2 hydrogencarbonate(out) = Fe(2+)(in) + 2 hydrogencarbonate(in). The enzyme catalyses Cd(2+)(out) + 2 hydrogencarbonate(out) = Cd(2+)(in) + 2 hydrogencarbonate(in). It catalyses the reaction Co(2+)(out) + 2 hydrogencarbonate(out) = Co(2+)(in) + 2 hydrogencarbonate(in). Functionally, electroneutral divalent metal cation:bicarbonate symporter of the plasma membrane mediating the cellular uptake of zinc and manganese, two divalent metal cations important for development, tissue homeostasis and immunity. Transports an electroneutral complex composed of a divalent metal cation and two bicarbonate anions or alternatively a bicarbonate and a selenite anion. Thereby, it also contributes to the cellular uptake of selenium, an essential trace metal and micronutrient. Also imports cadmium a non-essential metal which is cytotoxic and carcinogenic. May also transport iron and cobalt through membranes. Through zinc import, indirectly regulates the metal-dependent transcription factor MTF1 and the expression of some metalloproteases involved in cartilage catabolism and also probably heart development. Also indirectly regulates the expression of proteins involved in cell morphology and cytoskeleton organization. Indirectly controls innate immune function and inflammatory response by regulating zinc cellular uptake which in turn modulates the expression of genes specific of these processes. Protects, for instance, cells from injury and death at the onset of inflammation. By regulating zinc influx into monocytes also directly modulates their adhesion to endothelial cells and arteries. Reclaims manganese from the bile at the apical membrane of hepatocytes, thereby regulating the activity of the manganese-dependent enzymes through the systemic levels of the nutrient. Also participates in manganese reabsorption in the proximal tubule of the kidney. By mediating the extracellular uptake of manganese by cells of the blood-brain barrier, may also play a role in the transport of the micronutrient to the brain. With manganese cellular uptake also participates in mitochondrial proper function. Finally, also probably functions intracellularly, translocating zinc from lysosome to cytosol to indirectly enhance the expression of specific genes during TCR-mediated T cell activation. This is Metal cation symporter ZIP8 from Rattus norvegicus (Rat).